Here is a 225-residue protein sequence, read N- to C-terminus: Uracil-DNA glycosylase (225 aa).

Asp65 functions as the Proton acceptor in the catalytic mechanism.

It belongs to the uracil-DNA glycosylase (UDG) superfamily. UNG family.

Its subcellular location is the cytoplasm. It catalyses the reaction Hydrolyzes single-stranded DNA or mismatched double-stranded DNA and polynucleotides, releasing free uracil.. Functionally, excises uracil residues from the DNA which can arise as a result of misincorporation of dUMP residues by DNA polymerase or due to deamination of cytosine. This is Uracil-DNA glycosylase from Clostridium perfringens (strain SM101 / Type A).